The chain runs to 132 residues: Fibroblast growth factor 1 (132 aa).

Heparin-binding positions include Asn10 and 108 to 120; that span reads KTKPGSRTHFGQK.

Belongs to the heparin-binding growth factors family.

It is found in the secreted. The protein resides in the cytoplasm. Its subcellular location is the cell cortex. It localises to the cytosol. The protein localises to the nucleus. Its function is as follows. Plays an important role in the regulation of cell survival, cell division, angiogenesis, cell differentiation and cell migration. Functions as a potent mitogen in vitro. Acts as a ligand for FGFR1 and integrins. Binds to FGFR1 in the presence of heparin leading to FGFR1 dimerization and activation via sequential autophosphorylation on tyrosine residues which act as docking sites for interacting proteins, leading to the activation of several signaling cascades. Binds to integrins. Its binding to integrins and subsequent ternary complex formation with integrins and FGFR1 are essential for FGF1 signaling. This Notophthalmus viridescens (Eastern newt) protein is Fibroblast growth factor 1 (fgf1).